Here is a 453-residue protein sequence, read N- to C-terminus: Glucose N-acetyltransferase 1-B (453 aa).

Over 1–8 the chain is Cytoplasmic; it reads MLKRKVRY. The helical; Signal-anchor for type II membrane protein transmembrane segment at 9-29 threads the bilayer; the sequence is LLLIVVVFTGIILSVEAIMRF. Residues 30–453 lie on the Lumenal side of the membrane; the sequence is QLNKNVDYYL…LESRAICQVN (424 aa). 3 N-linked (GlcNAc...) asparagine glycosylation sites follow: N108, N126, and N176. The DXD motif lies at 187–189; that stretch reads DND.

It belongs to the GNT1 family.

It localises to the golgi apparatus membrane. The protein resides in the vacuole membrane. Functionally, N-acetylglucosaminyltransferase involved in the Golgi-specific modification of N-linked glycans. The sequence is that of Glucose N-acetyltransferase 1-B (GNT1-B) from Kluyveromyces lactis (strain ATCC 8585 / CBS 2359 / DSM 70799 / NBRC 1267 / NRRL Y-1140 / WM37) (Yeast).